An 80-amino-acid polypeptide reads, in one-letter code: Acyl carrier protein (80 aa).

In terms of domain architecture, Carrier spans 4-79; sequence NSIEEKVRSI…DVVAYIEKVQ (76 aa). At S39 the chain carries O-(pantetheine 4'-phosphoryl)serine.

The protein belongs to the acyl carrier protein (ACP) family. Post-translationally, 4'-phosphopantetheine is transferred from CoA to a specific serine of apo-ACP by AcpS. This modification is essential for activity because fatty acids are bound in thioester linkage to the sulfhydryl of the prosthetic group.

Its subcellular location is the cytoplasm. Its pathway is lipid metabolism; fatty acid biosynthesis. Functionally, carrier of the growing fatty acid chain in fatty acid biosynthesis. In Akkermansia muciniphila (strain ATCC BAA-835 / DSM 22959 / JCM 33894 / BCRC 81048 / CCUG 64013 / CIP 107961 / Muc), this protein is Acyl carrier protein.